A 138-amino-acid polypeptide reads, in one-letter code: Large-conductance mechanosensitive channel (138 aa).

Helical transmembrane passes span 15–35, 38–58, and 80–100; these read VDLAIGVIIGGAFGGLVNSIV, IIMPIIGLITGGIDFSNMFIQ, and GNFITLLINFLIIAWVLFLVV.

It belongs to the MscL family. In terms of assembly, homopentamer.

Its subcellular location is the cell inner membrane. Channel that opens in response to stretch forces in the membrane lipid bilayer. May participate in the regulation of osmotic pressure changes within the cell. The polypeptide is Large-conductance mechanosensitive channel (Brucella canis (strain ATCC 23365 / NCTC 10854 / RM-666)).